We begin with the raw amino-acid sequence, 710 residues long: Integrator complex subunit 10 (710 aa).

Phosphoserine is present on residues Ser231, Ser381, and Ser382. Residue Lys464 forms a Glycyl lysine isopeptide (Lys-Gly) (interchain with G-Cter in SUMO2) linkage.

It belongs to the Integrator subunit 10 family. As to quaternary structure, component of the Integrator complex, composed of core subunits INTS1, INTS2, INTS3, INTS4, INTS5, INTS6, INTS7, INTS8, INTS9/RC74, INTS10, INTS11/CPSF3L, INTS12, INTS13, INTS14 and INTS15. The core complex associates with protein phosphatase 2A subunits PPP2CA and PPP2R1A, to form the Integrator-PP2A (INTAC) complex. INTS10 is part of the tail subcomplex, composed of INTS10, INTS13, INTS14 and INTS15.

The protein localises to the nucleus. Functionally, component of the integrator complex, a multiprotein complex that terminates RNA polymerase II (Pol II) transcription in the promoter-proximal region of genes. The integrator complex provides a quality checkpoint during transcription elongation by driving premature transcription termination of transcripts that are unfavorably configured for transcriptional elongation: the complex terminates transcription by (1) catalyzing dephosphorylation of the C-terminal domain (CTD) of Pol II subunit POLR2A/RPB1 and SUPT5H/SPT5, (2) degrading the exiting nascent RNA transcript via endonuclease activity and (3) promoting the release of Pol II from bound DNA. The integrator complex is also involved in terminating the synthesis of non-coding Pol II transcripts, such as enhancer RNAs (eRNAs), small nuclear RNAs (snRNAs), telomerase RNAs and long non-coding RNAs (lncRNAs). Within the integrator complex, INTS10 is part of the integrator tail module that acts as a platform for the recruitment of transcription factors at promoters. May be not involved in the recruitment of cytoplasmic dynein to the nuclear envelope, probably as component of the integrator complex. This is Integrator complex subunit 10 from Homo sapiens (Human).